The following is a 92-amino-acid chain: Small archaeal modifier protein 3 (92 aa).

Residues Lys18, Lys55, and Lys62 each participate in a glycyl lysine isopeptide (Lys-Gly) (interchain with G-Cter in SAMP3) cross-link. Gly92 is subject to Glycyl adenylate; alternate. Gly92 is covalently cross-linked (Glycyl lysine isopeptide (Gly-Lys) (interchain with K-? in acceptor proteins); alternate).

As to quaternary structure, monomer. Post-translationally, the C-terminal glycine is likely acyl-adenylated (-COAMP) by UbaA.

Functionally, functions as a protein modifier covalently attached to lysine residues of substrate proteins. The protein modification process is termed sampylation and involves the formation of an isopeptide bond between the SAMP3 C-terminal glycine carboxylate and the epsilon-amino group of lysine residues on target proteins. Seems to be able to form polymeric chains with itself at Lys-18, Lys-55 and Lys-62, similar to ubiquitin and other ubiquitin-like proteins. SAMP3 appears not to serve as a proteolytic signal in the cell to target proteins for degradation by proteasomes. May regulate molybdenum cofactor (MoCo) biosynthesis by inhibiting the activity of MPT synthase MoaE under aerobic conditions, providing a hierarchy of oxygen use prior to that of alternative electron acceptors such as DMSO. This is Small archaeal modifier protein 3 (samp3) from Haloferax volcanii (strain ATCC 29605 / DSM 3757 / JCM 8879 / NBRC 14742 / NCIMB 2012 / VKM B-1768 / DS2) (Halobacterium volcanii).